Here is a 503-residue protein sequence, read N- to C-terminus: Glycosyltransferase family 92 protein ZK381.2 (503 aa).

The chain crosses the membrane as a helical span at residues 7–27 (YKPCLLIILIFNSVILLFILI). The GT92 domain maps to 156–441 (KPVIICISPQ…FKCYFDSFYK (286 aa)).

The protein belongs to the glycosyltransferase 92 family.

Its subcellular location is the membrane. The sequence is that of Glycosyltransferase family 92 protein ZK381.2 from Caenorhabditis elegans.